A 330-amino-acid polypeptide reads, in one-letter code: Peroxidase 42 (330 aa).

A signal peptide spans 1–23 (MGGKGVMMVAILCLWALSATSEA). 4 cysteine pairs are disulfide-bonded: cysteine 40-cysteine 119, cysteine 73-cysteine 78, cysteine 125-cysteine 323, and cysteine 204-cysteine 231. Histidine 71 serves as the catalytic Proton acceptor. Residues aspartate 72, valine 75, aspartate 79, and serine 81 each coordinate Ca(2+). Proline 167 serves as a coordination point for substrate. Residue asparagine 170 is glycosylated (N-linked (GlcNAc...) asparagine). Residue histidine 197 participates in heme b binding. Serine 198 is a Ca(2+) binding site. Ca(2+) contacts are provided by aspartate 247, threonine 250, and aspartate 255.

Belongs to the peroxidase family. Classical plant (class III) peroxidase subfamily. The cofactor is heme b. Requires Ca(2+) as cofactor. Constitutively expressed in the whole plant, with the highest expression in roots.

Its subcellular location is the secreted. It carries out the reaction 2 a phenolic donor + H2O2 = 2 a phenolic radical donor + 2 H2O. In terms of biological role, removal of H(2)O(2), oxidation of toxic reductants, biosynthesis and degradation of lignin, suberization, auxin catabolism, response to environmental stresses such as wounding, pathogen attack and oxidative stress. These functions might be dependent on each isozyme/isoform in each plant tissue. Its function is as follows. Might function as heat shock-like defense protein. In Arabidopsis thaliana (Mouse-ear cress), this protein is Peroxidase 42 (PER42).